The chain runs to 134 residues: Phosphomevalonate dehydratase small subunit (134 aa).

Catalysis depends on Ser-62, which acts as the Proton acceptor.

This sequence belongs to the AcnX type II small subunit family. As to quaternary structure, heterodimer composed of a large subunit (PMDh-L) and a small subunit (PMDh-S).

The enzyme catalyses (R)-5-phosphomevalonate = (2E)-3-methyl-5-phosphooxypent-2-enoate + H2O. It participates in isoprenoid biosynthesis; isopentenyl diphosphate biosynthesis via mevalonate pathway. In terms of biological role, component of a hydro-lyase that catalyzes the dehydration of mevalonate 5-phosphate (MVA5P) to form trans-anhydromevalonate 5-phosphate (tAHMP). Involved in the archaeal mevalonate (MVA) pathway, which provides fundamental precursors for isoprenoid biosynthesis, such as isopentenyl diphosphate (IPP) and dimethylallyl diphosphate (DMAPP). This is Phosphomevalonate dehydratase small subunit from Pyrococcus horikoshii (strain ATCC 700860 / DSM 12428 / JCM 9974 / NBRC 100139 / OT-3).